Reading from the N-terminus, the 67-residue chain is ATP synthase F(0) complex subunit 8 (67 aa).

Residues 8 to 24 (TWFITILSMLITLFILF) traverse the membrane as a helical segment. Lys-54 is subject to N6-acetyllysine; alternate. N6-succinyllysine; alternate is present on Lys-54. N6-acetyllysine is present on Lys-57.

It belongs to the ATPase protein 8 family. In terms of assembly, component of the ATP synthase complex composed at least of ATP5F1A/subunit alpha, ATP5F1B/subunit beta, ATP5MC1/subunit c (homooctomer), MT-ATP6/subunit a, MT-ATP8/subunit 8, ATP5ME/subunit e, ATP5MF/subunit f, ATP5MG/subunit g, ATP5MK/subunit k, ATP5MJ/subunit j, ATP5F1C/subunit gamma, ATP5F1D/subunit delta, ATP5F1E/subunit epsilon, ATP5PF/subunit F6, ATP5PB/subunit b, ATP5PD/subunit d, ATP5PO/subunit OSCP. ATP synthase complex consists of a soluble F(1) head domain (subunits alpha(3) and beta(3)) - the catalytic core - and a membrane F(0) domain - the membrane proton channel (subunits c, a, 8, e, f, g, k and j). These two domains are linked by a central stalk (subunits gamma, delta, and epsilon) rotating inside the F1 region and a stationary peripheral stalk (subunits F6, b, d, and OSCP). Interacts with PRICKLE3.

The protein localises to the mitochondrion membrane. In terms of biological role, subunit 8, of the mitochondrial membrane ATP synthase complex (F(1)F(0) ATP synthase or Complex V) that produces ATP from ADP in the presence of a proton gradient across the membrane which is generated by electron transport complexes of the respiratory chain. ATP synthase complex consist of a soluble F(1) head domain - the catalytic core - and a membrane F(1) domain - the membrane proton channel. These two domains are linked by a central stalk rotating inside the F(1) region and a stationary peripheral stalk. During catalysis, ATP synthesis in the catalytic domain of F(1) is coupled via a rotary mechanism of the central stalk subunits to proton translocation. In vivo, can only synthesize ATP although its ATP hydrolase activity can be activated artificially in vitro. Part of the complex F(0) domain. This Dugong dugon (Dugong) protein is ATP synthase F(0) complex subunit 8.